We begin with the raw amino-acid sequence, 67 residues long: uncharacterized protein (67 aa).

It belongs to the flocculin family.

This is an uncharacterized protein from Saccharomyces cerevisiae (strain ATCC 204508 / S288c) (Baker's yeast).